We begin with the raw amino-acid sequence, 444 residues long: MSQSYINVIGAGLAGSEAAYQIAKRGIPVKLYEMRGVKATPQHKTTHFAELVCSNSFRGDSLTNAVGLLKEELRRLDSIIMRAGEAHRVPAGGAMAVDREGYAKAVTAELENHPLIEIIREEVIDIPSDAITVIATGPLTSDSLAEKIHALNGGAGFYFYDAAAPIVDKSTINMDRVYLKSRYDKGEAAYLNCPMTKEEFMAFHEALTTAEEAPLNAFEKEKYFEGCMPIEVMAKRGIKTMLYGPMKPVGLEYPDDYKGPRDGDFKTPYAVVQLRQDNAAGSLYNIVGFQTHLKWGEQKRVFQMIPGLEHAEFVRYGVMHRNSYMDSPKLLTQGFQSRANHRLFFAGQMTGVEGYVESAASGLVAGINAARLFKEEEPLVFPNTTAIGSLPYYITHADSKHFQPMNVNFGIIKELDGPRIRDKKERYEAIAKRALADLAAYLTV.

10–15 (GAGLAG) lines the FAD pocket.

Belongs to the MnmG family. TrmFO subfamily. The cofactor is FAD.

It localises to the cytoplasm. It catalyses the reaction uridine(54) in tRNA + (6R)-5,10-methylene-5,6,7,8-tetrahydrofolate + NADH + H(+) = 5-methyluridine(54) in tRNA + (6S)-5,6,7,8-tetrahydrofolate + NAD(+). The enzyme catalyses uridine(54) in tRNA + (6R)-5,10-methylene-5,6,7,8-tetrahydrofolate + NADPH + H(+) = 5-methyluridine(54) in tRNA + (6S)-5,6,7,8-tetrahydrofolate + NADP(+). Its function is as follows. Catalyzes the folate-dependent formation of 5-methyl-uridine at position 54 (M-5-U54) in all tRNAs. In Streptococcus equi subsp. equi (strain 4047), this protein is Methylenetetrahydrofolate--tRNA-(uracil-5-)-methyltransferase TrmFO.